A 132-amino-acid polypeptide reads, in one-letter code: Small ribosomal subunit protein uS11 (132 aa).

It belongs to the universal ribosomal protein uS11 family. In terms of assembly, part of the 30S ribosomal subunit.

Functionally, located on the platform of the 30S subunit. The protein is Small ribosomal subunit protein uS11 of Saccharolobus solfataricus (strain ATCC 35092 / DSM 1617 / JCM 11322 / P2) (Sulfolobus solfataricus).